The chain runs to 277 residues: Eukaryotic translation initiation factor 3 subunit J (277 aa).

The tract at residues 1–80 (MSWDDEDFAV…PAATKNTMLD (80 aa)) is disordered. Over residues 23–43 (WDDEFAENDDEPVLESWEDEE) the composition is skewed to acidic residues. Over residues 50–75 (KAAAAAAAKAPKKASPSPAATPAATK) the composition is skewed to low complexity. The stretch at 199 to 230 (TVENIRQTIATLNVLMKDKEREERQARLAKVK) forms a coiled coil. Residues 257–277 (DNDFDLGGNDNFDDFGEDDFM) form a disordered region. A compositionally biased stretch (acidic residues) spans 267–277 (NFDDFGEDDFM).

This sequence belongs to the eIF-3 subunit J family. As to quaternary structure, component of the eukaryotic translation initiation factor 3 (eIF-3) complex.

The protein localises to the cytoplasm. Functionally, component of the eukaryotic translation initiation factor 3 (eIF-3) complex, which is involved in protein synthesis of a specialized repertoire of mRNAs and, together with other initiation factors, stimulates binding of mRNA and methionyl-tRNAi to the 40S ribosome. The eIF-3 complex specifically targets and initiates translation of a subset of mRNAs involved in cell proliferation. The polypeptide is Eukaryotic translation initiation factor 3 subunit J (Kluyveromyces lactis (strain ATCC 8585 / CBS 2359 / DSM 70799 / NBRC 1267 / NRRL Y-1140 / WM37) (Yeast)).